We begin with the raw amino-acid sequence, 348 residues long: Anthranilate phosphoribosyltransferase (348 aa).

5-phospho-alpha-D-ribose 1-diphosphate-binding positions include G81, 84–85, T89, 91–94, 109–117, and S121; these read GD, NIST, and KHGNRSSSG. G81 serves as a coordination point for anthranilate. S93 is a Mg(2+) binding site. An anthranilate-binding site is contributed by N112. R167 contributes to the anthranilate binding site. Residues D226 and E227 each coordinate Mg(2+).

This sequence belongs to the anthranilate phosphoribosyltransferase family. Homodimer. Requires Mg(2+) as cofactor.

The enzyme catalyses N-(5-phospho-beta-D-ribosyl)anthranilate + diphosphate = 5-phospho-alpha-D-ribose 1-diphosphate + anthranilate. It functions in the pathway amino-acid biosynthesis; L-tryptophan biosynthesis; L-tryptophan from chorismate: step 2/5. Its function is as follows. Catalyzes the transfer of the phosphoribosyl group of 5-phosphorylribose-1-pyrophosphate (PRPP) to anthranilate to yield N-(5'-phosphoribosyl)-anthranilate (PRA). The sequence is that of Anthranilate phosphoribosyltransferase from Nitrosopumilus maritimus (strain SCM1).